An 87-amino-acid chain; its full sequence is Phosphoribosyl-ATP pyrophosphatase (87 aa).

This sequence belongs to the PRA-PH family.

Its subcellular location is the cytoplasm. The catalysed reaction is 1-(5-phospho-beta-D-ribosyl)-ATP + H2O = 1-(5-phospho-beta-D-ribosyl)-5'-AMP + diphosphate + H(+). It participates in amino-acid biosynthesis; L-histidine biosynthesis; L-histidine from 5-phospho-alpha-D-ribose 1-diphosphate: step 2/9. The polypeptide is Phosphoribosyl-ATP pyrophosphatase (Arthrobacter sp. (strain FB24)).